The sequence spans 352 residues: UDP-3-O-acylglucosamine N-acyltransferase (352 aa).

The Proton acceptor role is filled by His242.

It belongs to the transferase hexapeptide repeat family. LpxD subfamily. As to quaternary structure, homotrimer.

The enzyme catalyses a UDP-3-O-[(3R)-3-hydroxyacyl]-alpha-D-glucosamine + a (3R)-hydroxyacyl-[ACP] = a UDP-2-N,3-O-bis[(3R)-3-hydroxyacyl]-alpha-D-glucosamine + holo-[ACP] + H(+). It participates in bacterial outer membrane biogenesis; LPS lipid A biosynthesis. Its function is as follows. Catalyzes the N-acylation of UDP-3-O-acylglucosamine using 3-hydroxyacyl-ACP as the acyl donor. Is involved in the biosynthesis of lipid A, a phosphorylated glycolipid that anchors the lipopolysaccharide to the outer membrane of the cell. This Alkalilimnicola ehrlichii (strain ATCC BAA-1101 / DSM 17681 / MLHE-1) protein is UDP-3-O-acylglucosamine N-acyltransferase.